A 393-amino-acid polypeptide reads, in one-letter code: S-adenosylmethionine synthase (393 aa).

Residue Glu-9 coordinates Mg(2+). Residue His-15 participates in ATP binding. Glu-43 contacts K(+). The L-methionine site is built by Glu-56 and Gln-99. ATP contacts are provided by residues 167–169 (HGK), 235–238 (SGRF), Asp-246, 252–253 (RK), Ala-269, Lys-273, and Lys-277. L-methionine is bound at residue Asp-246. Residue Lys-277 participates in L-methionine binding.

It belongs to the AdoMet synthase family. Homotetramer. The cofactor is Mn(2+). Mg(2+) serves as cofactor. Co(2+) is required as a cofactor. It depends on K(+) as a cofactor. As to expression, root.

The protein resides in the cytoplasm. The catalysed reaction is L-methionine + ATP + H2O = S-adenosyl-L-methionine + phosphate + diphosphate. Its pathway is amino-acid biosynthesis; S-adenosyl-L-methionine biosynthesis; S-adenosyl-L-methionine from L-methionine: step 1/1. Its function is as follows. Catalyzes the formation of S-adenosylmethionine from methionine and ATP. The reaction comprises two steps that are both catalyzed by the same enzyme: formation of S-adenosylmethionine (AdoMet) and triphosphate, and subsequent hydrolysis of the triphosphate. This is S-adenosylmethionine synthase (METK) from Pinus banksiana (Jack pine).